The following is a 523-amino-acid chain: Maturase K (523 aa).

It belongs to the intron maturase 2 family. MatK subfamily.

Its subcellular location is the plastid. It is found in the chloroplast. Usually encoded in the trnK tRNA gene intron. Probably assists in splicing its own and other chloroplast group II introns. The protein is Maturase K of Asphodeline lutea (King's spear).